The chain runs to 30 residues: Dermaseptin-J10 (30 aa).

Expressed by the skin glands.

The protein localises to the secreted. Functionally, has antimicrobial activity. This chain is Dermaseptin-J10, found in Phasmahyla jandaia (Jandaia leaf frog).